Consider the following 110-residue polypeptide: Large ribosomal subunit protein uL22 (110 aa).

The protein belongs to the universal ribosomal protein uL22 family. Part of the 50S ribosomal subunit.

In terms of biological role, this protein binds specifically to 23S rRNA; its binding is stimulated by other ribosomal proteins, e.g. L4, L17, and L20. It is important during the early stages of 50S assembly. It makes multiple contacts with different domains of the 23S rRNA in the assembled 50S subunit and ribosome. Its function is as follows. The globular domain of the protein is located near the polypeptide exit tunnel on the outside of the subunit, while an extended beta-hairpin is found that lines the wall of the exit tunnel in the center of the 70S ribosome. The protein is Large ribosomal subunit protein uL22 of Vesicomyosocius okutanii subsp. Calyptogena okutanii (strain HA).